Reading from the N-terminus, the 729-residue chain is Solute carrier family 15 member 2 (729 aa).

Residues 1 to 35 (MNPFQKNESKETLFSPVSTEEMLPRPPSPPKKSPP) are disordered. Residues 1–57 (MNPFQKNESKETLFSPVSTEEMLPRPPSPPKKSPPKIFGSSYPVSIAFIVVNEFCER) lie on the Cytoplasmic side of the membrane. Residue S9 is modified to Phosphoserine. The residue at position 12 (T12) is a Phosphothreonine. S28 carries the phosphoserine modification. Residues 58–78 (FSYYGMKAVLTLYFLYFLHWN) form a helical membrane-spanning segment. At 79-87 (EDTSTSVYH) the chain is on the extracellular side. Residues 88-108 (AFSSLCYFTPILGAAIADSWL) form a helical membrane-spanning segment. The Cytoplasmic portion of the chain corresponds to 109 to 113 (GKFKT). A helical membrane pass occupies residues 114–134 (IIYLSLVYVLGHVFKSLGAIP). Over 135–139 (ILGGK) the chain is Extracellular. A helical membrane pass occupies residues 140-160 (MLHTILSLVGLSLIALGTGGI). At 161–183 (KPCVAAFGGDQFEEEHAEARTRY) the chain is on the cytoplasmic side. A helical transmembrane segment spans residues 184 to 204 (FSVFYLAINAGSLISTFITPM). Residues 205–217 (LRGDVKCFGQDCY) are Extracellular-facing. The chain crosses the membrane as a helical span at residues 218–238 (ALAFGVPGLLMVLALVVFAMG). Topologically, residues 239–295 (SKMYRKPPPEGNIVAQVIKCIWFALCNRFRNRSGDLPKRQHWLDWAAEKYPKHLIAD) are cytoplasmic. The helical transmembrane segment at 296–316 (VKALTRVLFLYIPLPMFWALL) threads the bilayer. The Extracellular portion of the chain corresponds to 317 to 343 (DQQGSRWTLQANKMNGDLGFFVLQPDQ). A helical membrane pass occupies residues 344–364 (MQVLNPFLVLIFIPLFDLVIY). At 365–380 (RLISKCRINFSSLRKM) the chain is on the cytoplasmic side. A helical membrane pass occupies residues 381-401 (AVGMILACLAFAVAALVETKI). At 402–611 (NGMIHPQPAS…PVNKLSIAWQ (210 aa)) the chain is on the extracellular side. The interval 402 to 611 (NGMIHPQPAS…PVNKLSIAWQ (210 aa)) is extracellular domain (ECD). N-linked (GlcNAc...) asparagine glycosylation is found at N435, N448, N528, and N587. The helical transmembrane segment at 612–632 (LPQYVLVTAAEVMFSVTGLEF) threads the bilayer. The Cytoplasmic portion of the chain corresponds to 633-643 (SYSQAPSSMKS). Residues 644 to 664 (VLQAAWLLTVAVGNIIVLVVA) traverse the membrane as a helical segment. The Extracellular portion of the chain corresponds to 665–674 (QFSGLAQWAE). A helical transmembrane segment spans residues 675–695 (FVLFSCLLLVVCLIFSVMAYY). At 696 to 729 (YVPLKSEDTREATDKQIPAVQGNMINLETKNTRL) the chain is on the cytoplasmic side.

Belongs to the major facilitator superfamily. Proton-dependent oligopeptide transporter (POT/PTR) (TC 2.A.17) family. Interacts (via extracellular domain region) with trypsin. In terms of tissue distribution, strongly expressed in kidney cortex and medulla. Also detected in brain, lung and spleen. Expressed in choroid plexus.

The protein resides in the apical cell membrane. It localises to the cytoplasmic vesicle. It is found in the phagosome membrane. The protein localises to the cell membrane. It carries out the reaction a dipeptide(out) + 2 H(+)(out) = a dipeptide(in) + 2 H(+)(in). The catalysed reaction is glycyl-L-leucine(out) + 2 H(+)(out) = glycyl-L-leucine(in) + 2 H(+)(in). The enzyme catalyses glycyl-L-lysine(out) + 2 H(+)(out) = glycyl-L-lysine(in) + 2 H(+)(in). It catalyses the reaction glycyl-L-glutamate(out) + 3 H(+)(out) = glycyl-L-glutamate(in) + 3 H(+)(in). It carries out the reaction L-alanyl-L-alanine(out) + 2 H(+)(out) = L-alanyl-L-alanine(in) + 2 H(+)(in). The catalysed reaction is an L-amino acid tripeptide(out) + 2 H(+)(out) = an L-amino acid tripeptide(in) + 2 H(+)(in). The enzyme catalyses N-acetyl-D-muramoyl-L-alanyl-D-isoglutamine(out) + 3 H(+)(out) = N-acetyl-D-muramoyl-L-alanyl-D-isoglutamine(in) + 3 H(+)(in). It catalyses the reaction carnosine(out) + 2 H(+)(out) = carnosine(in) + 2 H(+)(in). Proton-coupled amino-acid transporter that transports oligopeptides of 2 to 4 amino acids with a preference for dipeptides. Transports neutral and anionic dipeptides with a proton to peptide stoichiometry of 2:1 or 3:1. In kidney, involved in the absorption of circulating di- and tripeptides from the glomerular filtrate. Can also transport beta-lactam antibiotics, such as the aminocephalosporin cefadroxil, and other antiviral and anticancer drugs. Transports the dipeptide-like aminopeptidase inhibitor bestatin. Also able to transport carnosine. Involved in innate immunity by promoting the detection of microbial pathogens by NOD-like receptors (NLRs). Mediates transport of bacterial peptidoglycans across the plasma membrane or, in macrophages, the phagosome membrane: catalyzes the transport of certain bacterial peptidoglycans, such as muramyl dipeptide (MDP), the NOD2 ligand. In Rattus norvegicus (Rat), this protein is Solute carrier family 15 member 2.